Consider the following 35-residue polypeptide: uncharacterized protein (35 aa).

A helical membrane pass occupies residues 14–34 (LAHLIGIIYLIIILGTLVMLF).

Its subcellular location is the endoplasmic reticulum membrane. This is an uncharacterized protein from Saccharomyces cerevisiae (strain ATCC 204508 / S288c) (Baker's yeast).